A 790-amino-acid polypeptide reads, in one-letter code: Histone-lysine N-methyltransferase, H3 lysine-9 specific SUVH6 (790 aa).

A disordered region spans residues 251 to 271; that stretch reads QLRILGVGTSSGSSSGDSSRN. Over residues 256–268 the composition is skewed to low complexity; it reads GVGTSSGSSSGDS. One can recognise a YDG domain in the interval 330–482; sequence GEVPGVEVGD…MNVFKFQLRR (153 aa). Positions 551-613 constitute a Pre-SET domain; the sequence is KSCCCTTRCT…SCYLRVTQHG (63 aa). 10 residues coordinate Zn(2+): Cys-553, Cys-554, Cys-555, Cys-559, Cys-567, Cys-569, Cys-595, Cys-599, Cys-601, and Cys-605. Positions 616 to 760 constitute an SET domain; sequence LPLEIFKTKS…PLQELCYDYN (145 aa). S-adenosyl-L-methionine contacts are provided by residues 626 to 628, Asp-662, Tyr-664, Arg-714, and 717 to 718; these read RGW and NH. The Zn(2+) site is built by Cys-720, Cys-778, Cys-780, and Cys-785. The region spanning 774–790 is the Post-SET domain; that stretch reads KQKPCFCGAAVCRRRLY.

The protein belongs to the class V-like SAM-binding methyltransferase superfamily. Histone-lysine methyltransferase family. Suvar3-9 subfamily.

It localises to the nucleus. Its subcellular location is the chromosome. The protein localises to the centromere. It catalyses the reaction N(6)-methyl-L-lysyl(9)-[histone H3] + S-adenosyl-L-methionine = N(6),N(6)-dimethyl-L-lysyl(9)-[histone H3] + S-adenosyl-L-homocysteine + H(+). The catalysed reaction is L-lysyl(9)-[histone H3] + S-adenosyl-L-methionine = N(6)-methyl-L-lysyl(9)-[histone H3] + S-adenosyl-L-homocysteine + H(+). Histone methyltransferase. Methylates 'Lys-9' of histone H3. H3 'Lys-9' methylation represents a specific tag for epigenetic transcriptional repression. Seems to act preferentially on dsMRNA. The chain is Histone-lysine N-methyltransferase, H3 lysine-9 specific SUVH6 (SUVH6) from Arabidopsis thaliana (Mouse-ear cress).